Here is a 470-residue protein sequence, read N- to C-terminus: Sulfate adenylyltransferase subunit 1 (470 aa).

One can recognise a tr-type G domain in the interval 22-238; it reads KELLRFITCG…ETIKIDYAYT (217 aa). The tract at residues 31 to 38 is G1; the sequence is GSVDDGKS. Position 31-38 (31-38) interacts with GTP; sequence GSVDDGKS. The segment at 89-93 is G2; sequence GITID. The segment at 110-113 is G3; it reads DTPG. Residues 110–114 and 165–168 contribute to the GTP site; these read DTPGH and NKMD. A G4 region spans residues 165-168; the sequence is NKMD. The interval 202–204 is G5; the sequence is SAL.

Belongs to the TRAFAC class translation factor GTPase superfamily. Classic translation factor GTPase family. CysN/NodQ subfamily. Heterodimer composed of CysD, the smaller subunit, and CysN.

It catalyses the reaction sulfate + ATP + H(+) = adenosine 5'-phosphosulfate + diphosphate. It participates in sulfur metabolism; hydrogen sulfide biosynthesis; sulfite from sulfate: step 1/3. Functionally, with CysD forms the ATP sulfurylase (ATPS) that catalyzes the adenylation of sulfate producing adenosine 5'-phosphosulfate (APS) and diphosphate, the first enzymatic step in sulfur assimilation pathway. APS synthesis involves the formation of a high-energy phosphoric-sulfuric acid anhydride bond driven by GTP hydrolysis by CysN coupled to ATP hydrolysis by CysD. The protein is Sulfate adenylyltransferase subunit 1 of Francisella tularensis subsp. tularensis (strain WY96-3418).